The following is a 185-amino-acid chain: Ribosome-recycling factor (185 aa).

The protein belongs to the RRF family.

The protein resides in the cytoplasm. Its function is as follows. Responsible for the release of ribosomes from messenger RNA at the termination of protein biosynthesis. May increase the efficiency of translation by recycling ribosomes from one round of translation to another. The chain is Ribosome-recycling factor from Clavibacter sepedonicus (Clavibacter michiganensis subsp. sepedonicus).